Consider the following 243-residue polypeptide: Orotidine 5'-phosphate decarboxylase (243 aa).

Substrate-binding positions include D19, K41, 69-78 (DLKFFDIPAT), T124, R185, Q194, G214, and R215. Residue K71 is the Proton donor of the active site.

It belongs to the OMP decarboxylase family. Type 1 subfamily. Homodimer.

It carries out the reaction orotidine 5'-phosphate + H(+) = UMP + CO2. The protein operates within pyrimidine metabolism; UMP biosynthesis via de novo pathway; UMP from orotate: step 2/2. In terms of biological role, catalyzes the decarboxylation of orotidine 5'-monophosphate (OMP) to uridine 5'-monophosphate (UMP). This chain is Orotidine 5'-phosphate decarboxylase, found in Xanthomonas oryzae pv. oryzae (strain MAFF 311018).